A 478-amino-acid chain; its full sequence is Ketoisovalerate oxidoreductase subunit VorA (478 aa).

Heterotrimer of the VorA, VorB and VorC subunits.

The polypeptide is Ketoisovalerate oxidoreductase subunit VorA (vorA) (Methanothermobacter marburgensis (strain ATCC BAA-927 / DSM 2133 / JCM 14651 / NBRC 100331 / OCM 82 / Marburg) (Methanobacterium thermoautotrophicum)).